The chain runs to 287 residues: Efem/EfeO family lipoprotein (287 aa).

An N-terminal signal peptide occupies residues 1–17 (MKKLPTILLASSLLLAA). Cys18 carries N-palmitoyl cysteine lipidation. Cys18 carries the S-diacylglycerol cysteine lipid modification. Residues 20–50 (NNSHSDDNSNKDKQSQSSKGENKASLQKATK) are disordered. The segment covering 23 to 33 (HSDDNSNKDKQ) has biased composition (basic and acidic residues).

The protein belongs to the EfeM/EfeO family.

Its subcellular location is the cell membrane. The chain is Efem/EfeO family lipoprotein from Staphylococcus haemolyticus (strain JCSC1435).